Reading from the N-terminus, the 150-residue chain is UPF0260 protein CGSHiGG_00425 (150 aa).

The protein belongs to the UPF0260 family.

The polypeptide is UPF0260 protein CGSHiGG_00425 (Haemophilus influenzae (strain PittGG)).